We begin with the raw amino-acid sequence, 415 residues long: Metal tolerance protein 5 (415 aa).

Over 1-124 (MAAAVAGGGE…REKVARSETL (124 aa)) the chain is Cytoplasmic. Residues 125–145 (AIRLSNIANMVLFAAKVYASV) form a helical membrane-spanning segment. Residues 146–150 (RSGSL) lie on the Vacuolar side of the membrane. A helical transmembrane segment spans residues 151–171 (AIIASTLDSLLDLLSGFILWF). Topologically, residues 172 to 192 (TAFSMQTPNPYRYPIGKKRMQ) are cytoplasmic. A helical membrane pass occupies residues 193 to 213 (PLGILVFASVMATLGLQIILE). Topologically, residues 214–232 (SVRSLLSDGDEFSLTKEQE) are vacuolar. A helical membrane pass occupies residues 233–253 (KWVVDIMLAVTLVKLALVLYC). Residues 254–268 (RTFTNEIVKAYAQDH) are Cytoplasmic-facing. Residues 269 to 291 (FFDVITNMIGLVAALLATYIEGW) traverse the membrane as a helical segment. Topologically, residues 292–293 (ID) are vacuolar. The helical transmembrane segment at 294–313 (PVGAIILAIYTIRTWSMTVL) threads the bilayer. The Cytoplasmic portion of the chain corresponds to 314 to 415 (ENVHSLVGQS…RPEHALSHEK (102 aa)).

Belongs to the cation diffusion facilitator (CDF) transporter (TC 2.A.4) family. SLC30A subfamily.

It localises to the vacuole membrane. In terms of biological role, involved in sequestration of excess metal in the cytoplasm into vacuoles to maintain metal homeostasis. The sequence is that of Metal tolerance protein 5 (MTP5) from Oryza sativa subsp. japonica (Rice).